The following is a 371-amino-acid chain: Barbiturase 1 (371 aa).

Residues 1 to 103 (MPDAIEVRKV…TIFATVPPED (103 aa)) form an RU A region. Substrate is bound by residues R53 and 82–83 (SG). The segment at 115 to 250 (RLTVGFAMSE…AQVVVVGNAP (136 aa)) is RU B. K165 is a catalytic residue. Residues N197 and 233–234 (SS) each bind substrate. S233 acts as the Nucleophile in catalysis. An RU C region spans residues 256-371 (YRIGHSVMKD…GPVAAIVDLG (116 aa)). Residue E304 coordinates Mg(2+). Substrate contacts are provided by residues K331 and 350–351 (SV). Mg(2+)-binding residues include A353, Q356, G357, P358, and G361.

The protein belongs to the cyclic amide hydrolase (CyAH) family. Homotetramer.

It catalyses the reaction barbiturate + H2O = 3-oxo-3-ureidopropanoate. The protein operates within pyrimidine metabolism; uracil degradation via oxidative pathway; malonate and urea from uracil: step 2/3. Its activity is regulated as follows. Inhibited by cyanuric acid. In terms of biological role, responsible for the hydrolysis of barbituric acid (2,4,6-trihydroxy-1,3-pyrimidine), an intermediate in the oxidative catabolism of pyrimidines. Catalyzes the hydrolytic opening of the pyrimidine ring of barbituric acid to yield ureidomalonic acid. This is Barbiturase 1 from Nocardioides sp. (strain ATCC BAA-499 / JS614).